We begin with the raw amino-acid sequence, 466 residues long: Probable Xaa-Pro aminopeptidase pepP (466 aa).

Mn(2+)-binding residues include aspartate 264, aspartate 275, glutamate 398, and glutamate 438.

This sequence belongs to the peptidase M24B family. It depends on Mn(2+) as a cofactor.

The catalysed reaction is Release of any N-terminal amino acid, including proline, that is linked to proline, even from a dipeptide or tripeptide.. Its function is as follows. Catalyzes the removal of a penultimate prolyl residue from the N-termini of peptides. This is Probable Xaa-Pro aminopeptidase pepP (pepP) from Aspergillus niger (strain ATCC MYA-4892 / CBS 513.88 / FGSC A1513).